A 125-amino-acid polypeptide reads, in one-letter code: Large ribosomal subunit protein uL18 (125 aa).

Gly-2 is modified (N-acetylglycine). 2 positions are modified to N6-acetyllysine: Lys-5 and Lys-48.

The protein belongs to the universal ribosomal protein uL18 family. In terms of assembly, component of the large ribosomal subunit (LSU). Part of the 5S RNP complex, which is a LSU subcomplex composed of the 5S RNA, RPL5 and RPL11. Component of a hexameric 5S RNP precursor complex, composed of 5S RNA, RRS1, RPF2/BXDC1, RPL5, RPL11 and HEATR3; this complex acts as a precursor for ribosome assembly. Interacts with NVL in an ATP-dependent manner. Interacts with RRP1B. Interacts with IPO5, IPO7 and KPNB1; these interactions may be involved in RPL5 nuclear import for the assembly of ribosomal subunits. Interacts with RRP1B.

The protein resides in the cytoplasm. It is found in the nucleus. Its subcellular location is the nucleolus. Its function is as follows. Component of the ribosome, a large ribonucleoprotein complex responsible for the synthesis of proteins in the cell. The small ribosomal subunit (SSU) binds messenger RNAs (mRNAs) and translates the encoded message by selecting cognate aminoacyl-transfer RNA (tRNA) molecules. The large subunit (LSU) contains the ribosomal catalytic site termed the peptidyl transferase center (PTC), which catalyzes the formation of peptide bonds, thereby polymerizing the amino acids delivered by tRNAs into a polypeptide chain. The nascent polypeptides leave the ribosome through a tunnel in the LSU and interact with protein factors that function in enzymatic processing, targeting, and the membrane insertion of nascent chains at the exit of the ribosomal tunnel. As part of the 5S RNP/5S ribonucleoprotein particle it is an essential component of the LSU, required for its formation and the maturation of rRNAs. It also couples ribosome biogenesis to p53/TP53 activation. As part of the 5S RNP it accumulates in the nucleoplasm and inhibits MDM2, when ribosome biogenesis is perturbed, mediating the stabilization and the activation of TP53. The polypeptide is Large ribosomal subunit protein uL18 (RPL5) (Sus scrofa (Pig)).